Here is a 963-residue protein sequence, read N- to C-terminus: Protocadherin alpha-C1 (963 aa).

Positions 1–18 are cleaved as a signal peptide; it reads MVGCGVAVLCLWVSCGAA. 5 Cadherin domains span residues 19-124, 125-233, 234-340, 349-445, and 446-555; these read AGQL…SPLF, PAGD…APVF, ERSV…APEL, VPED…TPNF, and PQPQ…YPVI. Over 19–683 the chain is Extracellular; it reads AGQLEYSVPE…GGQLSAQNLY (665 aa). A glycan (N-linked (GlcNAc...) asparagine) is linked at Asn-38. 2 N-linked (GlcNAc...) asparagine glycosylation sites follow: Asn-248 and Asn-274. A glycan (N-linked (GlcNAc...) asparagine) is linked at Asn-562. The Cadherin 6 domain maps to 570–667; it reads VPRSARTGHL…NSVPQLLPDF (98 aa). A helical transmembrane segment spans residues 684-704; the sequence is LVIALACISFLFLGCLLFFVC. Residues 705-963 are Cytoplasmic-facing; that stretch reads TKLHQSPGCC…GNSTTDNSDQ (259 aa). PXXP repeat units lie at residues 812-815, 845-848, 886-889, and 904-907; these read PRQP, PGGP, PGNP, and PGSP. Residues 812–907 form a 4 X 4 AA repeats of P-X-X-P region; sequence PRQPNPDWRY…PDKFIIPGSP (96 aa). The segment at 844–963 is disordered; the sequence is GPGGPDQQWP…GNSTTDNSDQ (120 aa). A compositionally biased stretch (basic and acidic residues) spans 922 to 936; that stretch reads DKSDFITFGKKEETK.

It is found in the cell membrane. Its function is as follows. Potential calcium-dependent cell-adhesion protein. May be involved in the establishment and maintenance of specific neuronal connections in the brain. In Homo sapiens (Human), this protein is Protocadherin alpha-C1 (PCDHAC1).